The chain runs to 479 residues: MIRRFRRTKIVATLGPSTDNHIILENMIKSGVNVFRLNFSHGTREEHIYRAKLVTSIAKRLNCHIALLGDLQGPKIRICKFQDKKVFLKVNNYFILDANLNENLGTSERVGIDYKNLPKDVKKCDILLLDDGKIQLKVINIVDQEIFTKIIIGGVLSNNKGINKLGGGLSARILTKKDKRDIITSIDIGVDYLAVSFPRYGSDLDHARKCAVKFGSKAKIIAKIERAEAVKDLKIIDEIILASDAIMVARGDLGVEIGESELAGIQKTLIRRARQLNRVVITATQMMESMINNPMPTRAEVMDVANAVLDGSDAVMLSAETASGKYPIETIKVMSKVCMGAEKMPSINVSQHRIHDKFHDIEEAIAMSAMYAANHLSGITAIITMTESGKTSLMTSRITSGLPIFALSSHIQTLKLTALYRGVTPIFFNSSKEGVSAANEVINLLVKRGFLEPGNLVIITQGDIMGKVGKTNTSRILKV.

Residue arginine 36 coordinates substrate. K(+) contacts are provided by asparagine 38, serine 40, and aspartate 70. 38-41 (NFSH) is an ATP binding site. ATP-binding residues include arginine 77 and lysine 160. Residue glutamate 225 coordinates Mg(2+). The substrate site is built by glycine 251, aspartate 252, and threonine 284. Aspartate 252 contacts Mg(2+).

It belongs to the pyruvate kinase family. In terms of assembly, homotetramer. Mg(2+) serves as cofactor. It depends on K(+) as a cofactor.

The enzyme catalyses pyruvate + ATP = phosphoenolpyruvate + ADP + H(+). It participates in carbohydrate degradation; glycolysis; pyruvate from D-glyceraldehyde 3-phosphate: step 5/5. Allosterically activated by AMP and by several sugar phosphates. Belongs to type II PK. The protein is Pyruvate kinase (pykA) of Buchnera aphidicola subsp. Baizongia pistaciae (strain Bp).